A 123-amino-acid polypeptide reads, in one-letter code: Small ribosomal subunit protein uS12 (123 aa).

Residues R9–P28 form a disordered region. Positions K18–A27 are enriched in low complexity. D89 is modified (3-methylthioaspartic acid).

This sequence belongs to the universal ribosomal protein uS12 family. In terms of assembly, part of the 30S ribosomal subunit. Contacts proteins S8 and S17. May interact with IF1 in the 30S initiation complex.

With S4 and S5 plays an important role in translational accuracy. Functionally, interacts with and stabilizes bases of the 16S rRNA that are involved in tRNA selection in the A site and with the mRNA backbone. Located at the interface of the 30S and 50S subunits, it traverses the body of the 30S subunit contacting proteins on the other side and probably holding the rRNA structure together. The combined cluster of proteins S8, S12 and S17 appears to hold together the shoulder and platform of the 30S subunit. The sequence is that of Small ribosomal subunit protein uS12 from Desulfosudis oleivorans (strain DSM 6200 / JCM 39069 / Hxd3) (Desulfococcus oleovorans).